The sequence spans 108 residues: Nucleoid-associated protein IL1848 (108 aa).

Disordered regions lie at residues 1 to 26 and 88 to 108; these read MFKGGMGNMMKQAQQMQERMQQAQEE and KERMSEITGGMGLPPGFKMPF. Over residues 9-26 the composition is skewed to low complexity; the sequence is MMKQAQQMQERMQQAQEE.

Belongs to the YbaB/EbfC family. In terms of assembly, homodimer.

Its subcellular location is the cytoplasm. The protein localises to the nucleoid. Functionally, binds to DNA and alters its conformation. May be involved in regulation of gene expression, nucleoid organization and DNA protection. This is Nucleoid-associated protein IL1848 from Idiomarina loihiensis (strain ATCC BAA-735 / DSM 15497 / L2-TR).